The primary structure comprises 669 residues: DNA ligase (669 aa).

NAD(+) contacts are provided by residues 34 to 38 (DAEYD), 83 to 84 (SL), and Glu-114. The N6-AMP-lysine intermediate role is filled by Lys-116. NAD(+) is bound by residues Arg-137, Glu-171, Lys-287, and Lys-311. Positions 405, 408, 423, and 428 each coordinate Zn(2+). Residues 591 to 669 (NVESYFAGKT…EERFLQELNK (79 aa)) enclose the BRCT domain.

The protein belongs to the NAD-dependent DNA ligase family. LigA subfamily. The cofactor is Mg(2+). Mn(2+) is required as a cofactor.

The catalysed reaction is NAD(+) + (deoxyribonucleotide)n-3'-hydroxyl + 5'-phospho-(deoxyribonucleotide)m = (deoxyribonucleotide)n+m + AMP + beta-nicotinamide D-nucleotide.. Functionally, DNA ligase that catalyzes the formation of phosphodiester linkages between 5'-phosphoryl and 3'-hydroxyl groups in double-stranded DNA using NAD as a coenzyme and as the energy source for the reaction. It is essential for DNA replication and repair of damaged DNA. This chain is DNA ligase, found in Bacillus cereus (strain G9842).